The primary structure comprises 355 residues: Methylthioribose-1-phosphate isomerase (355 aa).

Substrate-binding positions include 52 to 54, Arg-95, and Gln-204; that span reads RGA. Asp-245 serves as the catalytic Proton donor. Residue 255-256 coordinates substrate; it reads NK.

The protein belongs to the eIF-2B alpha/beta/delta subunits family. MtnA subfamily.

The enzyme catalyses 5-(methylsulfanyl)-alpha-D-ribose 1-phosphate = 5-(methylsulfanyl)-D-ribulose 1-phosphate. The protein operates within amino-acid biosynthesis; L-methionine biosynthesis via salvage pathway; L-methionine from S-methyl-5-thio-alpha-D-ribose 1-phosphate: step 1/6. In terms of biological role, catalyzes the interconversion of methylthioribose-1-phosphate (MTR-1-P) into methylthioribulose-1-phosphate (MTRu-1-P). This Acaryochloris marina (strain MBIC 11017) protein is Methylthioribose-1-phosphate isomerase.